The sequence spans 22 residues: Conantokin-Oc (22 aa).

The tract at residues 1–22 is disordered; that stretch reads GEEERKAMAELEAKKAQEALKA. 4-carboxyglutamate occurs at positions 3, 4, 10, and 18.

As to expression, expressed by the venom duct.

It localises to the secreted. Functionally, conantokins inhibit N-methyl-D-aspartate (NMDA) receptors. This is Conantokin-Oc from Conus ochroleucus (Perfect cone).